We begin with the raw amino-acid sequence, 546 residues long: Putative serine hydroxymethyltransferase, mitochondrial (546 aa).

Residues 1–64 constitute a mitochondrion transit peptide; it reads MSSFQSTAAV…RFSSSSIAND (64 aa). The residue at position 305 (Lys305) is an N6-(pyridoxal phosphate)lysine.

The protein belongs to the SHMT family. As to quaternary structure, homotetramer. The cofactor is pyridoxal 5'-phosphate.

The protein localises to the mitochondrion. It catalyses the reaction (6R)-5,10-methylene-5,6,7,8-tetrahydrofolate + glycine + H2O = (6S)-5,6,7,8-tetrahydrofolate + L-serine. The protein operates within one-carbon metabolism; tetrahydrofolate interconversion. Interconversion of serine and glycine. The polypeptide is Putative serine hydroxymethyltransferase, mitochondrial (cbs-2) (Neurospora crassa (strain ATCC 24698 / 74-OR23-1A / CBS 708.71 / DSM 1257 / FGSC 987)).